The following is a 225-amino-acid chain: MFERGDQGSMHQKRRGPGAHQCYFTKMITMATTFHTVDNIFVCTECKTYHVCDGGEDCYLVNMGEGLVCELTGRCAVNSVSFGNPRPMSPVIYPHHNTPGPNQFLDSVVQCVQRDVAIYLSSSSYEEVKDKVLLCQGELREEVADLIKTTFNHCQNIFQSAQCAYSLICSIYIHVIISVYSSKTVYGNLIFKCTKNKKFDSVAKSIRQAWMSILTTGDTFTTAVM.

Belongs to the herpesviridae UL92 family.

This is Gene 31 protein (31) from Connochaetes taurinus (Blue wildebeest).